Consider the following 216-residue polypeptide: Probable GTP-binding protein EngB (216 aa).

Residues 30-204 (SGLEVAFAGR…QMVLAGWLDL (175 aa)) enclose the EngB-type G domain. Residues 38–45 (GRSNAGKS), 64–68 (GRTQL), 82–85 (DLPG), 149–152 (TKAD), and 182–185 (LFSA) each bind GTP. Residues Ser45 and Thr66 each contribute to the Mg(2+) site.

Belongs to the TRAFAC class TrmE-Era-EngA-EngB-Septin-like GTPase superfamily. EngB GTPase family. It depends on Mg(2+) as a cofactor.

Its function is as follows. Necessary for normal cell division and for the maintenance of normal septation. The protein is Probable GTP-binding protein EngB of Ectopseudomonas mendocina (strain ymp) (Pseudomonas mendocina).